Here is a 689-residue protein sequence, read N- to C-terminus: Elongation factor G 1 (689 aa).

The region spanning 7–282 (DQVRTIGIIS…AVVDFLPSPL (276 aa)) is the tr-type G domain. GTP-binding positions include 16–23 (SHIDAGKT), 80–84 (DTPGH), and 134–137 (NKMD).

Belongs to the TRAFAC class translation factor GTPase superfamily. Classic translation factor GTPase family. EF-G/EF-2 subfamily.

The protein resides in the cytoplasm. Catalyzes the GTP-dependent ribosomal translocation step during translation elongation. During this step, the ribosome changes from the pre-translocational (PRE) to the post-translocational (POST) state as the newly formed A-site-bound peptidyl-tRNA and P-site-bound deacylated tRNA move to the P and E sites, respectively. Catalyzes the coordinated movement of the two tRNA molecules, the mRNA and conformational changes in the ribosome. The sequence is that of Elongation factor G 1 from Geobacter sulfurreducens (strain ATCC 51573 / DSM 12127 / PCA).